Reading from the N-terminus, the 550-residue chain is Keratin, type II cytoskeletal 74 (550 aa).

The head stretch occupies residues 1 to 140 (MSRQLNIKSG…DPEIQKVRAQ (140 aa)). The coil 1A stretch occupies residues 141–176 (EREQIMALNNKFASFIDKVRFLEQQNQVLGTKWELL). The 328-residue stretch at 141–468 (EREQIMALNN…KLLEGEECWM (328 aa)) folds into the IF rod domain. Residues 177 to 195 (QQMDLNNCRKNLEPILEGY) form a linker 1 region. A coil 1B region spans residues 196–287 (IGNLRKQLEM…CLYDAEVAQI (92 aa)). Residues 288-311 (QTHTSETSVILSMDNNRYLDLDSI) are linker 12. The tract at residues 312 to 464 (IAEVRAQYED…ATYSKLLEGE (153 aa)) is coil 2. The tail stretch occupies residues 465-550 (ECWMSGENPS…VSSRARKAAR (86 aa)). Positions 491–550 (HPGSSASTDLGASTMASTGTSSSSSTQSGQTRAKGARVGDPKDSQDKSTPVSSRARKAAR) are disordered. The segment covering 502–521 (ASTMASTGTSSSSSTQSGQT) has biased composition (low complexity). Basic and acidic residues predominate over residues 527-536 (RVGDPKDSQD).

This sequence belongs to the intermediate filament family. Heterotetramer of two type I and two type II keratins.

In terms of biological role, has a role in hair formation. Specific component of keratin intermediate filaments in the inner root sheath (IRS) of the hair follicle. This is Keratin, type II cytoskeletal 74 (KRT74) from Bos taurus (Bovine).